The sequence spans 56 residues: MAKKTTQLRPIIKLRSTAGTGYTYVTRKNRRNTPDRLVLKKFDPIVRRHVEFKEAR.

It belongs to the bacterial ribosomal protein bL33 family.

The chain is Large ribosomal subunit protein bL33B from Cutibacterium acnes (strain DSM 16379 / KPA171202) (Propionibacterium acnes).